The following is a 732-amino-acid chain: Catalase-peroxidase (732 aa).

Positions 1–24 are disordered; that stretch reads MDAKTDDNSAGKCPVAHGSAGRTN. The segment at residues 96–219 is a cross-link (tryptophyl-tyrosyl-methioninium (Trp-Tyr) (with M-245)); it reads WHSAGTYRIA…LGAVQMGLIY (124 aa). H97 serves as the catalytic Proton acceptor. The tryptophyl-tyrosyl-methioninium (Tyr-Met) (with W-96) cross-link spans 219–245; that stretch reads YVNPEGPNGNPDPLAAARDIRDTFARM. H260 contributes to the heme b binding site.

The protein belongs to the peroxidase family. Peroxidase/catalase subfamily. In terms of assembly, homodimer or homotetramer. It depends on heme b as a cofactor. In terms of processing, formation of the three residue Trp-Tyr-Met cross-link is important for the catalase, but not the peroxidase activity of the enzyme.

The catalysed reaction is H2O2 + AH2 = A + 2 H2O. It catalyses the reaction 2 H2O2 = O2 + 2 H2O. Bifunctional enzyme with both catalase and broad-spectrum peroxidase activity. The protein is Catalase-peroxidase of Mesorhizobium japonicum (strain LMG 29417 / CECT 9101 / MAFF 303099) (Mesorhizobium loti (strain MAFF 303099)).